Consider the following 861-residue polypeptide: Leucine--tRNA ligase (861 aa).

Residues 43–53 carry the 'HIGH' region motif; sequence PYPSGKLHMGH. A 'KMSKS' region motif is present at residues 588–592; the sequence is KMSKS. Lys591 is an ATP binding site.

Belongs to the class-I aminoacyl-tRNA synthetase family.

It localises to the cytoplasm. It carries out the reaction tRNA(Leu) + L-leucine + ATP = L-leucyl-tRNA(Leu) + AMP + diphosphate. The protein is Leucine--tRNA ligase of Symbiobacterium thermophilum (strain DSM 24528 / JCM 14929 / IAM 14863 / T).